The sequence spans 112 residues: uncharacterized protein (112 aa).

N-linked (GlcNAc...) asparagine; by host glycans are attached at residues N29 and N60. Residues 66 to 86 traverse the membrane as a helical segment; that stretch reads IFNGLGFILIVIFIYLLLITL.

Belongs to the asfivirus B117L family.

The protein resides in the host membrane. The protein localises to the virion. This is an uncharacterized protein from African swine fever virus (isolate Tick/South Africa/Pretoriuskop Pr4/1996) (ASFV).